Here is a 287-residue protein sequence, read N- to C-terminus: Hydroxysteroid 11-beta-dehydrogenase 1-like protein (287 aa).

An N-terminal signal peptide occupies residues 1 to 15; sequence MKVLLLTGLGALFFA. Residues 36-62, 87-88, and 114-116 each bind NADP(+); these read GVSAGIGEELAYHYARLGSHLVLTAHT, DM, and NHL. Serine 165 serves as a coordination point for substrate. The active-site Proton acceptor is the tyrosine 178. NADP(+) contacts are provided by residues 178–182 and 211–217; these read YSAAK and GLRDRAS. Asparagine 280 carries N-linked (GlcNAc...) asparagine glycosylation.

It belongs to the short-chain dehydrogenases/reductases (SDR) family.

Its subcellular location is the secreted. It carries out the reaction cortisone + NADPH + H(+) = cortisol + NADP(+). In terms of biological role, unidirectional NADP(+)-dependent cortisol dehydrogenase (in vitro). In Bos taurus (Bovine), this protein is Hydroxysteroid 11-beta-dehydrogenase 1-like protein (HSD11B1L).